The following is a 254-amino-acid chain: 5-oxoprolinase subunit A (254 aa).

Belongs to the LamB/PxpA family. Forms a complex composed of PxpA, PxpB and PxpC.

The enzyme catalyses 5-oxo-L-proline + ATP + 2 H2O = L-glutamate + ADP + phosphate + H(+). In terms of biological role, catalyzes the cleavage of 5-oxoproline to form L-glutamate coupled to the hydrolysis of ATP to ADP and inorganic phosphate. This Rhodopseudomonas palustris (strain BisB5) protein is 5-oxoprolinase subunit A.